Consider the following 236-residue polypeptide: 1-(5-phosphoribosyl)-5-[(5-phosphoribosylamino)methylideneamino] imidazole-4-carboxamide isomerase (236 aa).

The active-site Proton acceptor is Asp-8. The active-site Proton donor is the Asp-127.

Belongs to the HisA/HisF family.

The protein localises to the cytoplasm. The catalysed reaction is 1-(5-phospho-beta-D-ribosyl)-5-[(5-phospho-beta-D-ribosylamino)methylideneamino]imidazole-4-carboxamide = 5-[(5-phospho-1-deoxy-D-ribulos-1-ylimino)methylamino]-1-(5-phospho-beta-D-ribosyl)imidazole-4-carboxamide. It participates in amino-acid biosynthesis; L-histidine biosynthesis; L-histidine from 5-phospho-alpha-D-ribose 1-diphosphate: step 4/9. The chain is 1-(5-phosphoribosyl)-5-[(5-phosphoribosylamino)methylideneamino] imidazole-4-carboxamide isomerase from Campylobacter concisus (strain 13826).